The chain runs to 422 residues: uncharacterized protein (422 aa).

3 positions are modified to phosphoserine: S124, S126, and S151. The disordered stretch occupies residues 144–166 (TNSLNHDSPPSTPPRRPDTSTSK). K250 is covalently cross-linked (Glycyl lysine isopeptide (Lys-Gly) (interchain with G-Cter in SUMO2)). Disordered stretches follow at residues 251–285 (ADTTTGSKPTGVFSRLGATPETDEDLAWDSDNDSS) and 299–324 (GRGPAKASPQPALTVKAKATSSATTA). Residues 271-282 (ETDEDLAWDSDN) are compositionally biased toward acidic residues. Residues S280 and S306 each carry the phosphoserine modification. Residues 310–324 (ALTVKAKATSSATTA) are compositionally biased toward low complexity. Residue S351 is modified to Phosphoserine.

This is an uncharacterized protein from Homo sapiens (Human).